Reading from the N-terminus, the 268-residue chain is Purine nucleoside phosphorylase (268 aa).

Phosphate is bound by residues serine 36, histidine 68, 88–90, and alanine 120; that span reads RIH. An a purine D-ribonucleoside-binding site is contributed by glutamate 189. Serine 208 is a phosphate binding site. Residue asparagine 231 participates in a purine D-ribonucleoside binding.

Belongs to the PNP/MTAP phosphorylase family. As to quaternary structure, homotrimer.

It catalyses the reaction a purine 2'-deoxy-D-ribonucleoside + phosphate = a purine nucleobase + 2-deoxy-alpha-D-ribose 1-phosphate. It participates in purine metabolism; purine nucleoside salvage. Functionally, the purine nucleoside phosphorylases catalyze the phosphorolytic breakdown of the N-glycosidic bond in the beta-(deoxy)ribonucleoside molecules, with the formation of the corresponding free purine bases and pentose-1-phosphate. Cleaves guanosine, inosine, 2'-deoxyguanosine and 2'-deoxyinosine. This chain is Purine nucleoside phosphorylase (punA), found in Mycobacterium leprae (strain TN).